Here is a 358-residue protein sequence, read N- to C-terminus: 3-ketosteroid-9-alpha-monooxygenase, ferredoxin reductase component (358 aa).

One can recognise an FAD-binding FR-type domain in the interval Asp-12 to Thr-124. Residues Ala-269–Glu-358 form the 2Fe-2S ferredoxin-type domain. [2Fe-2S] cluster-binding residues include Cys-305, Cys-310, Cys-313, and Cys-343.

Monomer. The two-component system 3-ketosteroid-9-alpha-monooxygenase is composed of an oxygenase component KshA and a reductase component KshB. FAD serves as cofactor. Requires [2Fe-2S] cluster as cofactor.

It carries out the reaction androsta-1,4-diene-3,17-dione + 2 reduced [2Fe-2S]-[ferredoxin] + O2 + 2 H(+) = 9alpha-hydroxyandrosta-1,4-diene-3,17-dione + 2 oxidized [2Fe-2S]-[ferredoxin] + H2O. The protein operates within lipid metabolism; steroid biosynthesis. Functionally, involved in the degradation of cholesterol. Catalyzes the introduction of a 9a-hydroxyl moiety into 1,4-androstadiene-3,17-dione (ADD) to yield the 9alpha-hydroxy-1,4-androstadiene-3,17-dione (9OHADD) intermediate which spontaneously form 3-hydroxy-9,10-seconandrost-1,3,5(10)-triene-9,17-dione (HSA) via the meta-cleavage of ring B with concomitant aromatization of ring A. This Mycobacterium tuberculosis (strain CDC 1551 / Oshkosh) protein is 3-ketosteroid-9-alpha-monooxygenase, ferredoxin reductase component (hmp).